Here is a 74-residue protein sequence, read N- to C-terminus: Auswaprin-a (74 aa).

An N-terminal signal peptide occupies residues 1–24 (MSSGGLLLLLGLLTLWGVLTPVSS). The WAP domain occupies 27–71 (RPKKPGLCPPRPQKPCVKECKNDWSCSGQQKCCNYGCIDECRDPI). Cystine bridges form between Cys34/Cys59, Cys42/Cys63, Cys46/Cys58, and Cys52/Cys67.

This sequence belongs to the venom waprin family. As to expression, expressed by the venom gland.

The protein resides in the secreted. Functionally, damages membranes of susceptible bacteria. Has no hemolytic activity. Not toxic to mice. Does not inhibit the proteinases elastase and cathepsin G. This Pseudechis australis (Mulga snake) protein is Auswaprin-a.